A 532-amino-acid polypeptide reads, in one-letter code: 2,3-bisphosphoglycerate-independent phosphoglycerate mutase (532 aa).

Mn(2+)-binding residues include Asp-15 and Ser-65. The Phosphoserine intermediate role is filled by Ser-65. Residues His-126, 156 to 157 (RD), Arg-188, Arg-194, 258 to 261 (RPDR), and Lys-331 each bind substrate. Asp-398, His-402, Asp-439, His-440, and His-457 together coordinate Mn(2+).

Belongs to the BPG-independent phosphoglycerate mutase family. Monomer. Mn(2+) serves as cofactor.

It carries out the reaction (2R)-2-phosphoglycerate = (2R)-3-phosphoglycerate. The protein operates within carbohydrate degradation; glycolysis; pyruvate from D-glyceraldehyde 3-phosphate: step 3/5. Catalyzes the interconversion of 2-phosphoglycerate and 3-phosphoglycerate. The sequence is that of 2,3-bisphosphoglycerate-independent phosphoglycerate mutase from Gloeothece citriformis (strain PCC 7424) (Cyanothece sp. (strain PCC 7424)).